Reading from the N-terminus, the 163-residue chain is Phosphopantetheine adenylyltransferase (163 aa).

Thr-10 contributes to the substrate binding site. ATP is bound by residues 10–11 (TF) and His-18. Lys-42, Leu-74, and Arg-88 together coordinate substrate. Residues 89-91 (GLR), Glu-99, and 124-130 (NSFISST) each bind ATP.

This sequence belongs to the bacterial CoaD family. Homohexamer. Mg(2+) serves as cofactor.

It localises to the cytoplasm. The enzyme catalyses (R)-4'-phosphopantetheine + ATP + H(+) = 3'-dephospho-CoA + diphosphate. Its pathway is cofactor biosynthesis; coenzyme A biosynthesis; CoA from (R)-pantothenate: step 4/5. Functionally, reversibly transfers an adenylyl group from ATP to 4'-phosphopantetheine, yielding dephospho-CoA (dPCoA) and pyrophosphate. The protein is Phosphopantetheine adenylyltransferase of Shewanella baltica (strain OS155 / ATCC BAA-1091).